Reading from the N-terminus, the 360-residue chain is Phospho-N-acetylmuramoyl-pentapeptide-transferase (360 aa).

Transmembrane regions (helical) follow at residues 26 to 46, 72 to 92, 94 to 114, 132 to 152, 168 to 188, 199 to 219, 236 to 256, 263 to 283, 288 to 308, and 338 to 358; these read AIVS…RMIA, PTMG…LWAY, SNPY…VGFV, WKYF…YMIG, VMPQ…VGTS, GLAI…AWAT, AGEL…FLWF, VFMG…IAVL, FLLV…ILQV, and VIVR…ATLK.

Belongs to the glycosyltransferase 4 family. MraY subfamily. The cofactor is Mg(2+).

The protein resides in the cell inner membrane. It carries out the reaction UDP-N-acetyl-alpha-D-muramoyl-L-alanyl-gamma-D-glutamyl-meso-2,6-diaminopimeloyl-D-alanyl-D-alanine + di-trans,octa-cis-undecaprenyl phosphate = di-trans,octa-cis-undecaprenyl diphospho-N-acetyl-alpha-D-muramoyl-L-alanyl-D-glutamyl-meso-2,6-diaminopimeloyl-D-alanyl-D-alanine + UMP. It participates in cell wall biogenesis; peptidoglycan biosynthesis. Functionally, catalyzes the initial step of the lipid cycle reactions in the biosynthesis of the cell wall peptidoglycan: transfers peptidoglycan precursor phospho-MurNAc-pentapeptide from UDP-MurNAc-pentapeptide onto the lipid carrier undecaprenyl phosphate, yielding undecaprenyl-pyrophosphoryl-MurNAc-pentapeptide, known as lipid I. This is Phospho-N-acetylmuramoyl-pentapeptide-transferase from Erwinia tasmaniensis (strain DSM 17950 / CFBP 7177 / CIP 109463 / NCPPB 4357 / Et1/99).